Here is a 204-residue protein sequence, read N- to C-terminus: LexA repressor (204 aa).

Positions 30 to 50 (IREICQGVGLSSPSTVHHHLK) form a DNA-binding region, H-T-H motif. Catalysis depends on for autocatalytic cleavage activity residues serine 125 and lysine 162.

Belongs to the peptidase S24 family. Homodimer.

The enzyme catalyses Hydrolysis of Ala-|-Gly bond in repressor LexA.. In terms of biological role, represses a number of genes involved in the response to DNA damage (SOS response), including recA and lexA. In the presence of single-stranded DNA, RecA interacts with LexA causing an autocatalytic cleavage which disrupts the DNA-binding part of LexA, leading to derepression of the SOS regulon and eventually DNA repair. The chain is LexA repressor from Carboxydothermus hydrogenoformans (strain ATCC BAA-161 / DSM 6008 / Z-2901).